Here is a 446-residue protein sequence, read N- to C-terminus: Nuclear envelope integral membrane protein 1 (446 aa).

The signal sequence occupies residues 1–37 (MAGFMKYKSVSTTIETVRLKLILTAVLFLFPFSQTSG). N-linked (GlcNAc...) asparagine glycosylation is found at Asn-62, Asn-118, and Asn-129. 5 helical membrane-spanning segments follow: residues 154-174 (IYLFLVFLAGVLLFFYADVLS), 181-201 (YSAGMSTGMIASLLILIFIVY), 209-229 (PFYMLVVGGWSFSLYIIQLVF), 239-259 (HWHLAIGYVFVVGFISFAVCY), and 269-289 (SINILSWALQIFGLLLVYAGI). Residues 410-431 (LFSTDEEDKEEEEDGWETEDDI) are compositionally biased toward acidic residues. Positions 410 to 446 (LFSTDEEDKEEEEDGWETEDDIKPEVTSPRMNNTRGK) are disordered. Residue Asn-441 is glycosylated (N-linked (GlcNAc...) asparagine).

It belongs to the NEMP family.

The protein resides in the nucleus inner membrane. Contributes to nuclear envelope stiffness in germ cells. Involved in male and female fertility. Essential for normal erythropoiesis. Required for efficient nuclear envelope opening and enucleation during the late stages of erythroblast maturation. This chain is Nuclear envelope integral membrane protein 1, found in Danio rerio (Zebrafish).